The following is a 1121-amino-acid chain: Pleckstrin homology domain-containing family A member 7 (1121 aa).

WW domains are found at residues 9 to 42 (DTLPEHWSYGVCRDGRVFFINDQLRCTTWLHPRT) and 54 to 87 (SDLPRGWEEGFTEEGASYFIDHNQQTTAFRHPVT). The segment at 105–137 (PHMSKQDRNQRPSSMVSETSTAGTASTLEAKPG) is disordered. Over residues 115-131 (RPSSMVSETSTAGTAST) the composition is skewed to polar residues. One can recognise a PH domain in the interval 164-282 (PVVVRGWLHK…WVRAMNQAAQ (119 aa)). Residues 299–514 (QAVPQANHTE…LKMSSEERRA (216 aa)) are disordered. Composition is skewed to basic and acidic residues over residues 308–356 (ESCH…EGKR) and 437–446 (HWARAQKGDS). Positions 460–475 (PGQSLSFPENYQTLPK) are enriched in polar residues. The span at 497–514 (YAQDRASHLKMSSEERRA) shows a compositional bias: basic and acidic residues. Ser536, Ser545, Ser569, Ser604, Ser608, and Ser612 each carry phosphoserine. The segment at 538–696 (TAPICLGSPE…AESDTDVKLS (159 aa)) is interaction with CTNND1. The interval 547–632 (EFTDQGRSRS…NSSHVDRRSM (86 aa)) is disordered. A compositionally biased stretch (pro residues) spans 567–582 (PPSPSDIPPPGPPRVF). Positions 589-605 (TPAERVTVKPPDQRRSV) are enriched in basic and acidic residues. Residues 700–801 (EQDRVLQDLE…LQEQHRRAFF (102 aa)) are a coiled coil. Disordered stretches follow at residues 841–876 (RKTVPLFPHPPVPSLSTSESKPPPQPSPPTSPVRTP) and 888–971 (YVPY…ELGQ). A phosphoserine mark is found at Ser858, Ser860, and Ser867. The span at 861-871 (KPPPQPSPPTS) shows a compositional bias: pro residues. The residue at position 870 (Thr870) is a Phosphothreonine. A phosphoserine mark is found at Ser871, Ser903, and Ser907. Residues 933-942 (DQPPAVPPLP) are compositionally biased toward pro residues. Residues 958–969 (RQSDERKRDREL) are compositionally biased toward basic and acidic residues. Ser986 carries the post-translational modification Phosphoserine. Disordered stretches follow at residues 1003–1028 (GLVGPESRYQTLPGRGLSGSTSRLQQ) and 1082–1121 (RHQKALVRERKRTLGQGERTGLPSSRYLSRPLPGDLGSVC). Positions 1067-1094 (QRGKMSAEEQLERMKRHQKALVRERKRT) form a coiled coil. Residues 1082–1094 (RHQKALVRERKRT) are compositionally biased toward basic residues.

As to quaternary structure, interacts with CAMSAP3 and CTNND1. Interacts (via WW domains) with TSPAN33 (via cytoplasmic domain) and with PDZD11; the interaction with TSPAN33 is dependent on PDZD11 being bound to PLEKHA7 and facilitates the docking of ADAM10 to zonula adherens through interaction of TSPAN33 with ADAM10.

It localises to the cell junction. It is found in the adherens junction. Its subcellular location is the cytoplasm. The protein localises to the cytoskeleton. The protein resides in the microtubule organizing center. It localises to the centrosome. Required for zonula adherens biogenesis and maintenance. Acts via its interaction with CAMSAP3, which anchors microtubules at their minus-ends to zonula adherens, leading to the recruitment of KIFC3 kinesin to the junctional site. Mediates docking of ADAM10 to zonula adherens through a PDZD11-dependent interaction with the ADAM10-binding protein TSPAN33. The sequence is that of Pleckstrin homology domain-containing family A member 7 (PLEKHA7) from Homo sapiens (Human).